A 476-amino-acid chain; its full sequence is Argininosuccinate lyase (476 aa).

The protein belongs to the lyase 1 family. Argininosuccinate lyase subfamily.

Its subcellular location is the cytoplasm. It catalyses the reaction 2-(N(omega)-L-arginino)succinate = fumarate + L-arginine. The protein operates within amino-acid biosynthesis; L-arginine biosynthesis; L-arginine from L-ornithine and carbamoyl phosphate: step 3/3. The sequence is that of Argininosuccinate lyase from Leptothrix cholodnii (strain ATCC 51168 / LMG 8142 / SP-6) (Leptothrix discophora (strain SP-6)).